A 135-amino-acid chain; its full sequence is Integration host factor subunit beta (135 aa).

The span at 83-92 (GKELRERVDR) shows a compositional bias: basic and acidic residues. The segment at 83-135 (GKELRERVDRTVTQGGGMNGNGHAPHGKTGQSQLGSQSPASLHDDGQLNLVRS) is disordered. Residues 111–122 (TGQSQLGSQSPA) show a composition bias toward polar residues.

Belongs to the bacterial histone-like protein family. Heterodimer of an alpha and a beta chain.

In terms of biological role, this protein is one of the two subunits of integration host factor, a specific DNA-binding protein that functions in genetic recombination as well as in transcriptional and translational control. The polypeptide is Integration host factor subunit beta (Cupriavidus metallidurans (strain ATCC 43123 / DSM 2839 / NBRC 102507 / CH34) (Ralstonia metallidurans)).